The chain runs to 369 residues: Deoxyhypusine synthase (369 aa).

A Phosphoserine modification is found at Ser78. NAD(+) contacts are provided by residues 105 to 109 (SNLIS), 131 to 133 (TAG), Glu137, and Asp238. 136 to 137 (EE) contributes to the spermidine binding site. Position 243 (Asp243) interacts with spermidine. Gly283 contacts NAD(+). Residue His288 participates in spermidine binding. Residue 308 to 309 (TA) coordinates NAD(+). Residues 314–316 (GSD) and 323–329 (EAVSWGK) each bind spermidine. Lys329 functions as the Nucleophile in the catalytic mechanism. NAD(+) is bound at residue 342-343 (DA).

The protein belongs to the deoxyhypusine synthase family. Homotetramer formed by a dimer of dimers. Requires NAD(+) as cofactor.

The enzyme catalyses [eIF5A protein]-L-lysine + spermidine = [eIF5A protein]-deoxyhypusine + propane-1,3-diamine. It functions in the pathway protein modification; eIF5A hypusination. Functionally, catalyzes the NAD-dependent oxidative cleavage of spermidine and the subsequent transfer of the butylamine moiety of spermidine to the epsilon-amino group of a critical lysine residue of the eIF-5A precursor protein to form the intermediate deoxyhypusine residue. This is the first step of the post-translational modification of that lysine into an unusual amino acid residue named hypusine. Hypusination is unique to mature eIF-5A factor and is essential for its function. The chain is Deoxyhypusine synthase (DHPS) from Homo sapiens (Human).